A 383-amino-acid chain; its full sequence is Erythronate-4-phosphate dehydrogenase (383 aa).

Residues serine 45 and threonine 67 each coordinate substrate. Residue aspartate 147 coordinates NAD(+). The active site involves arginine 208. Residue aspartate 232 coordinates NAD(+). The active site involves glutamate 237. Histidine 254 serves as the catalytic Proton donor. Residue glycine 257 participates in NAD(+) binding. Tyrosine 258 contributes to the substrate binding site.

The protein belongs to the D-isomer specific 2-hydroxyacid dehydrogenase family. PdxB subfamily. As to quaternary structure, homodimer.

The protein localises to the cytoplasm. The catalysed reaction is 4-phospho-D-erythronate + NAD(+) = (R)-3-hydroxy-2-oxo-4-phosphooxybutanoate + NADH + H(+). Its pathway is cofactor biosynthesis; pyridoxine 5'-phosphate biosynthesis; pyridoxine 5'-phosphate from D-erythrose 4-phosphate: step 2/5. Its function is as follows. Catalyzes the oxidation of erythronate-4-phosphate to 3-hydroxy-2-oxo-4-phosphonooxybutanoate. This Psychromonas ingrahamii (strain DSM 17664 / CCUG 51855 / 37) protein is Erythronate-4-phosphate dehydrogenase.